A 152-amino-acid polypeptide reads, in one-letter code: UPF0178 protein YaiI (152 aa).

Belongs to the UPF0178 family.

This is UPF0178 protein YaiI from Escherichia coli O6:K15:H31 (strain 536 / UPEC).